Reading from the N-terminus, the 168-residue chain is Signal peptidase I V (168 aa).

The Cytoplasmic segment spans residues 1-6 (MKKRFW). A helical transmembrane segment spans residues 7–26 (FLAGVVSVVLAIQVKNAVFI). The Extracellular portion of the chain corresponds to 27 to 168 (DYKVEGVSMN…NIVGVISDAE (142 aa)). Active-site residues include serine 34 and lysine 75.

The protein belongs to the peptidase S26 family.

It localises to the cell membrane. It catalyses the reaction Cleavage of hydrophobic, N-terminal signal or leader sequences from secreted and periplasmic proteins.. This chain is Signal peptidase I V (sipV), found in Bacillus subtilis (strain 168).